The sequence spans 631 residues: MAKAVGIDLGTTNSVIAVMEGGRPEVIVNAEGNRTTPSVVAYKGDERLVGQIARRQAALNPQATLFEVKRFIGRRWDEVKDEAARSPFTVKEGPGGSVRIEVDGKDYAPEQVSAEVLRKLVGDASAKLGQKITDAVITVPAYFDNSQREATKQAGEIAGLNVLRVINEPTAAALAYGLERKGDETILVFDLGGGTFDVTILELGDGVFEVKSTSGDTSLGGADFDQRIVDWLAEEFNKEHNFDLRKDKQALQRLIEAAEKAKIELSNASETSISLPFITFDPETRTPLHLERTLSRAKFEELTADLLKRVRQPVEQAMRDAGVSSSDLNEVILVGGSTRIPAVKRIVKDLTGKEPNESVNPDEAVALGAAVQAGIIQGDSNLGDIVLVDVTPLTLGVEVKGGMIAPMITRNTAVPAKKTEIYTTAENNQPGVEINVLQGERPMAADNKSLGRFKLEGIPPMRAGQAQIEVTFDIDANGILNVTAKEKTTGKESSITIENTTTLDKSDVERMVKEAEQNAEADKARKERVEKRNALDQMRVQALQQIDENAAAPQDAKDRLKAVADEAEQAVGSDDDSRIAEVQGRLEEELRNFMTQNSAAAGAQEGAGQPGAAQDQDDVIDADFKPADDNK.

T195 is subject to Phosphothreonine; by autocatalysis. Residues 593–631 (FMTQNSAAAGAQEGAGQPGAAQDQDDVIDADFKPADDNK) are disordered. The span at 599–614 (AAAGAQEGAGQPGAAQ) shows a compositional bias: low complexity. The segment covering 622 to 631 (ADFKPADDNK) has biased composition (basic and acidic residues).

Belongs to the heat shock protein 70 family.

Its function is as follows. Acts as a chaperone. The sequence is that of Chaperone protein DnaK (dnaK) from Deinococcus proteolyticus (strain ATCC 35074 / DSM 20540 / JCM 6276 / NBRC 101906 / NCIMB 13154 / VKM Ac-1939 / CCM 2703 / MRP).